The primary structure comprises 430 residues: 2-deoxy-scyllo-inosose synthase (430 aa).

NAD(+) contacts are provided by residues Asp42, 73–76 (EVHK), 105–109 (GVTGN), 129–130 (TT), 140–142 (SLK), and 151–152 (KN). Residue Lys142 is part of the active site. Position 184 (Glu184) interacts with Co(2+). Glu244 is an active-site residue. 2 residues coordinate Co(2+): His247 and His263. The tract at residues 371 to 430 (RGGAGGGAAEPAAARTGPVPDGPEAAVPATPGPVPAGPAAAAPLPSGPAPTAPAAAGPVP) is disordered. The span at 379-399 (AEPAAARTGPVPDGPEAAVPA) shows a compositional bias: low complexity.

Belongs to the sugar phosphate cyclases superfamily. DOI synthase family. NAD(+) is required as a cofactor. Requires Co(2+) as cofactor.

It catalyses the reaction D-glucose 6-phosphate = 2-deoxy-L-scyllo-inosose + phosphate. The protein operates within metabolic intermediate biosynthesis; 2-deoxystreptamine biosynthesis; 2-deoxystreptamine from D-glucose 6-phosphate: step 1/4. Its pathway is antibiotic biosynthesis; neomycin biosynthesis. In terms of biological role, catalyzes the intramolecular carbocycle formation from D-glucose-6-phosphate to 2-deoxy-scyllo-inosose (DOI). The protein is 2-deoxy-scyllo-inosose synthase (neoC) of Streptomyces fradiae (Streptomyces roseoflavus).